Reading from the N-terminus, the 206-residue chain is Large ribosomal subunit protein uL3 (206 aa).

Residues 116 to 149 (GFQGAIKRHNQSRGPMSHGSRYHRRPGSMGPVAP) are disordered.

The protein belongs to the universal ribosomal protein uL3 family. Part of the 50S ribosomal subunit. Forms a cluster with proteins L14 and L19.

Functionally, one of the primary rRNA binding proteins, it binds directly near the 3'-end of the 23S rRNA, where it nucleates assembly of the 50S subunit. The protein is Large ribosomal subunit protein uL3 of Shouchella clausii (strain KSM-K16) (Alkalihalobacillus clausii).